Reading from the N-terminus, the 258-residue chain is Putative gamma-secretase subunit APH-1C (258 aa).

7 helical membrane passes run 5–25, 32–52, 71–91, 116–136, 161–181, 187–207, and 214–234; these read VFFGCAFIAFGPAFALYLFTI, VIFLIAGAFFWLVSLLLSSMF, LLIFGALLSVCIQELFRLAYY, LLAYVSGLGFGIMSGVFSFVN, AFMTLVVIMLHVFWGVVFFDG, WYTLLTVLLTHLVVSTQTFLS, and LVTAYIIMVLMGIWAFYVAGG.

The protein belongs to the APH-1 family. As to quaternary structure, potential component of the gamma-secretase complex.

It is found in the membrane. Potential subunit of the gamma-secretase complex, an endoprotease complex that catalyzes the intramembrane cleavage of integral proteins such as Notch receptors and APP (amyloid-beta precursor protein). This is Putative gamma-secretase subunit APH-1C (Aph1c) from Mus musculus (Mouse).